Reading from the N-terminus, the 491-residue chain is Chondroitin proteoglycan 2 (491 aa).

A signal peptide spans 1–18; it reads MKTIVALGLLALATAASG. The Chitin-binding type-2 1 domain occupies 21–78; it reads LQDCTNALDGLYAIGNCESQFLTCSGGIARIMDCPADLIYNEPLLICDWRHNVVGCEG. Cys-54 and Cys-67 are disulfide-bonded. Positions 80–126 are disordered; the sequence is GEASGEQSGEGSGEASGEGSGEASGEGSGEASGEGSGSGEGSGEENN. Gly residues predominate over residues 87-120; the sequence is SGEGSGEASGEGSGEASGEGSGEASGEGSGSGEG. One can recognise a Chitin-binding type-2 2 domain in the interval 125–182; that stretch reads NNVCEGLEDGAYSSGGCTTYYFFCTDNTARFLSCPTPLFYDVATQKCAWKALVEECNG. Cys-158 and Cys-171 form a disulfide bridge. The segment at 187 to 217 is disordered; the sequence is DGSGETSGEGSGEASGENSGENSGEGSGEFE. Residues Ser-197 and Ser-201 are each glycosylated (O-linked (Xyl...) (chondroitin sulfate) serine). Over residues 200–210 the composition is skewed to low complexity; the sequence is ASGENSGENSG. Chitin-binding type-2 domains are found at residues 217–274, 279–334, 367–423, and 436–491; these read EPTC…ECHG, APVC…ECQE, ENEC…KCLI, and PFDC…LQCH. 2 disulfides stabilise this stretch: Cys-250–Cys-263 and Cys-310–Cys-323. The segment at 336–367 is disordered; sequence SGEESSGEASGEQSGEGSGEASGEASGEASGE. Positions 356–367 are enriched in low complexity; sequence ASGEASGEASGE. Cys-399 and Cys-412 are joined by a disulfide. A glycan (N-linked (GlcNAc...) asparagine) is linked at Asn-464. Cysteines 467 and 481 form a disulfide.

Required for polar body extrusion during cytokinesis in embryo development. Affects cortical granule size. Shown to have roles in meiotic chromosome segregation, osmotic barrier function and polarization in conjunction with cpg-2. Binds chitin. This is Chondroitin proteoglycan 2 from Caenorhabditis briggsae.